Here is a 367-residue protein sequence, read N- to C-terminus: Leu/Ile/Val-binding protein (367 aa).

Positions 1–23 are cleaved as a signal peptide; that stretch reads MNMKGKALLAGCIALSLSNMAFA. Residues C76 and C101 are joined by a disulfide bond.

Belongs to the leucine-binding protein family.

The protein resides in the periplasm. In terms of biological role, this protein is a component of the leucine, isoleucine, valine, (threonine) transport system, which is one of the two periplasmic binding protein-dependent transport systems of the high-affinity transport of the branched-chain amino acids. The polypeptide is Leu/Ile/Val-binding protein (livJ) (Citrobacter freundii).